The primary structure comprises 199 residues: Recombination protein RecR (199 aa).

The C4-type zinc-finger motif lies at 57–72; it reads CQSCRTFTEQSLCPIC. The 96-residue stretch at 81 to 176 folds into the Toprim domain; sequence GVICVVETPA…IISRIAHGVP (96 aa).

This sequence belongs to the RecR family.

Functionally, may play a role in DNA repair. It seems to be involved in an RecBC-independent recombinational process of DNA repair. It may act with RecF and RecO. This Shewanella denitrificans (strain OS217 / ATCC BAA-1090 / DSM 15013) protein is Recombination protein RecR.